Reading from the N-terminus, the 842-residue chain is Valine--tRNA ligase (842 aa).

The 'HIGH' region signature appears at 86–96 (PFTSGELHMGH). The short motif at 572–576 (RMSKS) is the 'KMSKS' region element. ATP is bound at residue Lys-575.

Belongs to the class-I aminoacyl-tRNA synthetase family. ValS type 2 subfamily.

The protein resides in the cytoplasm. The enzyme catalyses tRNA(Val) + L-valine + ATP = L-valyl-tRNA(Val) + AMP + diphosphate. Functionally, catalyzes the attachment of valine to tRNA(Val). As ValRS can inadvertently accommodate and process structurally similar amino acids such as threonine, to avoid such errors, it has a 'posttransfer' editing activity that hydrolyzes mischarged Thr-tRNA(Val) in a tRNA-dependent manner. The sequence is that of Valine--tRNA ligase from Saccharolobus solfataricus (strain ATCC 35092 / DSM 1617 / JCM 11322 / P2) (Sulfolobus solfataricus).